The sequence spans 308 residues: 1D-myo-inositol 2-acetamido-2-deoxy-alpha-D-glucopyranoside deacetylase (308 aa).

His37, Asp40, and His171 together coordinate Zn(2+).

It belongs to the MshB deacetylase family. The cofactor is Zn(2+).

It carries out the reaction 1D-myo-inositol 2-acetamido-2-deoxy-alpha-D-glucopyranoside + H2O = 1D-myo-inositol 2-amino-2-deoxy-alpha-D-glucopyranoside + acetate. Its function is as follows. Catalyzes the deacetylation of 1D-myo-inositol 2-acetamido-2-deoxy-alpha-D-glucopyranoside (GlcNAc-Ins) in the mycothiol biosynthesis pathway. The polypeptide is 1D-myo-inositol 2-acetamido-2-deoxy-alpha-D-glucopyranoside deacetylase (Mycobacterium sp. (strain JLS)).